Here is a 1141-residue protein sequence, read N- to C-terminus: DNA-directed RNA polymerase subunit beta (1141 aa).

This sequence belongs to the RNA polymerase beta chain family. In terms of assembly, the RNAP catalytic core consists of 2 alpha, 1 beta, 1 beta' and 1 omega subunit. When a sigma factor is associated with the core the holoenzyme is formed, which can initiate transcription.

It catalyses the reaction RNA(n) + a ribonucleoside 5'-triphosphate = RNA(n+1) + diphosphate. In terms of biological role, DNA-dependent RNA polymerase catalyzes the transcription of DNA into RNA using the four ribonucleoside triphosphates as substrates. This chain is DNA-directed RNA polymerase subunit beta, found in Parafrankia sp. (strain EAN1pec).